Here is a 79-residue protein sequence, read N- to C-terminus: Immunity protein CdiI (79 aa).

The next 2 helical transmembrane spans lie at 12-32 (IIFF…IGLI) and 51-71 (VVLF…LGLW).

As to quaternary structure, probably interacts with cognate toxin CdiA.

It is found in the cell inner membrane. Its function is as follows. Immunity protein component of a toxin-immunity protein module, which functions as a cellular contact-dependent growth inhibition (CDI) system. CDI modules allow bacteria to communicate with and inhibit the growth of closely related neighboring bacteria in a contact-dependent fashion. Protects cells against CdiA from the same strain, its cognate toxin protein. Growth inhibition is reversible upon induction of this protein, occurring about 2.5 hours after induction, and requires an energy source. Does not protect against non-cognate CdiA from E.coli strain 563 / UPEC, D.dadantii strain 3937 or Y.pestis strain CO92. The protein is Immunity protein CdiI of Escherichia coli.